Here is a 418-residue protein sequence, read N- to C-terminus: Gamma-glutamyl phosphate reductase (418 aa).

Belongs to the gamma-glutamyl phosphate reductase family.

It is found in the cytoplasm. The catalysed reaction is L-glutamate 5-semialdehyde + phosphate + NADP(+) = L-glutamyl 5-phosphate + NADPH + H(+). It participates in amino-acid biosynthesis; L-proline biosynthesis; L-glutamate 5-semialdehyde from L-glutamate: step 2/2. Functionally, catalyzes the NADPH-dependent reduction of L-glutamate 5-phosphate into L-glutamate 5-semialdehyde and phosphate. The product spontaneously undergoes cyclization to form 1-pyrroline-5-carboxylate. This Clostridium kluyveri (strain NBRC 12016) protein is Gamma-glutamyl phosphate reductase.